Here is a 328-residue protein sequence, read N- to C-terminus: Putative GDP-L-fucose synthase 2 (328 aa).

N-acetylalanine is present on A2. 26-32 contributes to the NADP(+) binding site; it reads GHRGLVG. Y152 (proton donor/acceptor) is an active-site residue. NADP(+) contacts are provided by residues K156, 179 to 182, and H195; that span reads PTNL. Positions 203, 218, 225, and 285 each coordinate substrate.

Belongs to the NAD(P)-dependent epimerase/dehydratase family. Fucose synthase subfamily. Homodimer.

The enzyme catalyses GDP-beta-L-fucose + NADP(+) = GDP-4-dehydro-alpha-D-rhamnose + NADPH + H(+). It participates in nucleotide-sugar biosynthesis; GDP-L-fucose biosynthesis via de novo pathway; GDP-L-fucose from GDP-alpha-D-mannose: step 2/2. Functionally, catalyzes the two-step NADP-dependent conversion of GDP-4-dehydro-6-deoxy-D-mannose to GDP-fucose, involving an epimerase and a reductase reaction. The protein is Putative GDP-L-fucose synthase 2 (GER2) of Arabidopsis thaliana (Mouse-ear cress).